The primary structure comprises 96 residues: Co-chaperonin GroES (96 aa).

The protein belongs to the GroES chaperonin family. As to quaternary structure, heptamer of 7 subunits arranged in a ring. Interacts with the chaperonin GroEL.

The protein localises to the cytoplasm. Together with the chaperonin GroEL, plays an essential role in assisting protein folding. The GroEL-GroES system forms a nano-cage that allows encapsulation of the non-native substrate proteins and provides a physical environment optimized to promote and accelerate protein folding. GroES binds to the apical surface of the GroEL ring, thereby capping the opening of the GroEL channel. The polypeptide is Co-chaperonin GroES (Paracidovorax citrulli (strain AAC00-1) (Acidovorax citrulli)).